The sequence spans 104 residues: T-complex protein 1 subunit zeta (104 aa).

Gly24 contributes to the ADP binding site. Gly24 serves as a coordination point for ATP. Asp75 contacts Mg(2+). 3 residues coordinate ADP: Gly76, Thr78, and Ser79. ATP contacts are provided by Gly76 and Thr78.

The protein belongs to the TCP-1 chaperonin family. Component of the chaperonin-containing T-complex (TRiC), a hexadecamer composed of two identical back-to-back stacked rings enclosing a protein folding chamber. Each ring is made up of eight different subunits: TCP1/CCT1, CCT2, CCT3, CCT4, CCT5, CCT6A/CCT6, CCT7, CCT8. Interacts with PACRG.

It is found in the cytoplasm. It carries out the reaction ATP + H2O = ADP + phosphate + H(+). In terms of biological role, component of the chaperonin-containing T-complex (TRiC), a molecular chaperone complex that assists the folding of actin, tubulin and other proteins upon ATP hydrolysis. The TRiC complex mediates the folding of WRAP53/TCAB1, thereby regulating telomere maintenance. This Sus scrofa (Pig) protein is T-complex protein 1 subunit zeta (CCT6).